The following is a 55-amino-acid chain: Large ribosomal subunit protein bL33 (55 aa).

This sequence belongs to the bacterial ribosomal protein bL33 family.

The polypeptide is Large ribosomal subunit protein bL33 (Bartonella henselae (strain ATCC 49882 / DSM 28221 / CCUG 30454 / Houston 1) (Rochalimaea henselae)).